A 1554-amino-acid chain; its full sequence is MASLNTPECPVMSSRPSMSCGNSSSSGLAIQGHSQRPSQTDPSAVEQAAQDSVIDLTNSDYETCDANRATKRQKLDLRIDVPNTQRAPKARFSQAVSSPFALQDTVPPIRTGRPFWDFGEEVSGFGFQGSLESEIPNDEPEQPDSLPPLPVRPWRYRPQGHSSREETPRVNQNAGAEVQTTPFCIEVPEAAPIFDSGKPLDFYPWKGDHPEDSLTDQTAKQGYYDRVQVSQNESNTARPSLYVQLKHRSGLKLLSSVFTAAIDKRQSHCRVTGFSTFKPPPRVTLTDIKRETWLRDLANPSVPLRRLSRTIPHGIRGRILLDQCVNKAIPIGRAVWLVKCVGANEIRAFKRKGTSAAITHSLEVKWVRDWSINVHQFIESVVTACGTPNWASTMSYVIRFAARLFQEQLLDQALCLDWFLQSLRTAPIGTLPIWLSMLGAYWTSLVRYRKRGRPLAESLLEKLKTILSLEDSGPKKQIADRLSWLIKTFAESHPACFVLPLTWRTYKSTLTTCFCLHLSEDNRKIGALSNRNERIVKAEICRQSGRQSPSQQVICLLDSADSLNDMEILSSGCLNLHFDHGSLIMKILEWVSTSFRRGSARVYVAVRLLRKWRRAGMDTDNCIVNFLQQKADTPGFSPANIYHLVCELVRSQSFAVGKYLQWLMARGAVRNDAPMHPTVQLLAHLPRRKLPSHVWNLRNTLLTKAGFLLSSENQQILNTKRYIHHRLPEVITKPIAGDNEGLFTPSDLSNLNWTIKSEIGHWIREHVSLHRKRYLRTAPNHHNACAIEISALTPAQFFEIRDIIECLGDLSLLADILKHTSSSDNIIVLISAVDTLNYCADSFKAIGALSDLFKSALAGYAHVNKADVSIIELISSLLEVGMKLPGEIPVVAMLRRDLSHFDKKFTGAVSSPVSDHTGESVNIASPAFSEGLHQLLNSGSGMDEPNMNKIFDMLSRKLKQSKEPNASSHEIARHLSQLRVLNSDVFDRLMVKWIISTLKSSPRPHLLTFLPPLIGVGCVTFEAFFALIDRLLKSDSHRQSIQDVSGLRYEMINLLRKEIFYELGSIDLVSYRFKTTREEYITHHAYDALGLVNEALANVNPESTSNPPLVPLLCELIIQNLNAFGPEGAGRIVEEFPNCVDIIHQALDVLLGLKAQVGVQKTQSVVGLIDDLSLSYCLVKLRLLLDANPDGDAARSSIVDLLFRTAESDIRNGERRWLEVLNVLPVSAAHLIRQRAEREILSLSLISSSLTTFSSEEDALIYLCIVEELSYSIPDEFSPSSMGADLGDKMFLLLQKTVELANAKKGTDLESGASSTALGVAELSIGVWFFVLLRLVALHRSLVPPNCDSRTEINHQTRLLVQICCISRSPLFARRSTQSFISSISTFTKCDSLLRMLPSSWANLQLQALDVCSTLVDTLSDEARYECARFLRDKCPAFLHPQNDARLLFLFGPIIESQSITTHGSSRASTSTPVTNLTQHVQSTPPPSQNTLTPGMVEEPNLFTNKLRFQQNGRITGPYPPKPWEMLGDAAPIIGINDTPVNLAYFGTRQSKRL.

2 disordered regions span residues 1–73 (MASL…TKRQ) and 128–173 (QGSL…VNQN). A compositionally biased stretch (low complexity) spans 13 to 26 (SSRPSMSCGNSSSS). Over residues 32-42 (GHSQRPSQTDP) the composition is skewed to polar residues.

This sequence belongs to the Mediator complex subunit 12 family. In terms of assembly, component of the SRB8-11 complex, which itself associates with the Mediator complex.

Its subcellular location is the nucleus. Component of the SRB8-11 complex. The SRB8-11 complex is a regulatory module of the Mediator complex which is itself involved in regulation of basal and activated RNA polymerase II-dependent transcription. The SRB8-11 complex may be involved in the transcriptional repression of a subset of genes regulated by Mediator. It may inhibit the association of the Mediator complex with RNA polymerase II to form the holoenzyme complex. This is Mediator of RNA polymerase II transcription subunit 12 (SRB8) from Coccidioides immitis (strain RS) (Valley fever fungus).